The chain runs to 151 residues: U-scoloptoxin(17)-Er2a (151 aa).

Positions 1–22 are cleaved as a signal peptide; that stretch reads MKSFFVVFAIVFQATLVALSLA.

This sequence belongs to the scoloptoxin-17 family. In terms of processing, contains 5 disulfide bonds. As to expression, expressed by the venom gland.

The protein resides in the secreted. The protein is U-scoloptoxin(17)-Er2a of Ethmostigmus rubripes (Giant centipede).